The primary structure comprises 325 residues: 26S proteasome non-ATPase regulatory subunit 7 (325 aa).

Positions 8–142 constitute an MPN domain; the sequence is TIVHPTVLLS…TKSYVTVEEI (135 aa). Positions 285 to 325 are disordered; the sequence is KKADIINSTPPTTATSPSVADKGKEKEQNAFNGADKPSKQA. A compositionally biased stretch (low complexity) spans 292–302; that stretch reads STPPTTATSPS.

This sequence belongs to the peptidase M67A family.

Functionally, acts as a regulatory subunit of the 26S proteasome which is involved in the ATP-dependent degradation of ubiquitinated proteins. The polypeptide is 26S proteasome non-ATPase regulatory subunit 7 (psmD7) (Dictyostelium discoideum (Social amoeba)).